Here is a 371-residue protein sequence, read N- to C-terminus: Dihydroorotate dehydrogenase (quinone) (371 aa).

FMN-binding positions include 79–83 (AGFDK) and threonine 103. Residue lysine 83 coordinates substrate. 128 to 132 (NRMGF) lines the substrate pocket. Positions 156 and 189 each coordinate FMN. Residue asparagine 189 participates in substrate binding. Catalysis depends on serine 192, which acts as the Nucleophile. A substrate-binding site is contributed by asparagine 194. FMN contacts are provided by lysine 225 and threonine 253. 254-255 (NT) serves as a coordination point for substrate. Residues glycine 279, glycine 308, and 329–330 (YT) contribute to the FMN site.

Belongs to the dihydroorotate dehydrogenase family. Type 2 subfamily. As to quaternary structure, monomer. FMN serves as cofactor.

It is found in the cell membrane. The enzyme catalyses (S)-dihydroorotate + a quinone = orotate + a quinol. It participates in pyrimidine metabolism; UMP biosynthesis via de novo pathway; orotate from (S)-dihydroorotate (quinone route): step 1/1. Catalyzes the conversion of dihydroorotate to orotate with quinone as electron acceptor. The polypeptide is Dihydroorotate dehydrogenase (quinone) (Corynebacterium glutamicum (strain R)).